Consider the following 206-residue polypeptide: MSSRRRVLLKVIILGDSGVGKTSLMNQFVNRKFSNQYKATIGADFLTKEVQIDDRIFTLQIWDTAGQERFQSLGVAFYRGADCCVLVYDVNVMKSFDNLNNWREEFLIQASPSDPENFPFVVLGNKTDVDGGKSRVVSEKKAKAWCASKGNIPYFETSAKEGFNVDAAFECITKNAFKNEPEEEPYLPDTIDVAGGQQQRSTGCEC.

15–22 (GDSGVGKT) is a GTP binding site. An Effector region motif is present at residues 37–45 (YKATIGADF). GTP is bound by residues 63-67 (DTAGQ), 125-128 (NKTD), and 158-159 (SA). S-geranylgeranyl cysteine attachment occurs at residues cysteine 204 and cysteine 206. Cysteine 206 carries the post-translational modification Cysteine methyl ester.

Belongs to the small GTPase superfamily. Rab family.

It localises to the cell membrane. In terms of biological role, intracellular vesicle trafficking and protein transport. This is Ras-related protein RABG3d (RABG3D) from Arabidopsis thaliana (Mouse-ear cress).